The chain runs to 107 residues: uncharacterized protein (107 aa).

The segment covering 1–14 (MTERNASGRMNTKG) has biased composition (polar residues). A disordered region spans residues 1 to 20 (MTERNASGRMNTKGRSIKET).

Its subcellular location is the mitochondrion. This is an uncharacterized protein from Arabidopsis thaliana (Mouse-ear cress).